The following is a 513-amino-acid chain: ATP synthase subunit alpha (513 aa).

An ATP-binding site is contributed by 169–176 (GDRQTGKT).

The protein belongs to the ATPase alpha/beta chains family. F-type ATPases have 2 components, CF(1) - the catalytic core - and CF(0) - the membrane proton channel. CF(1) has five subunits: alpha(3), beta(3), gamma(1), delta(1), epsilon(1). CF(0) has three main subunits: a(1), b(2) and c(9-12). The alpha and beta chains form an alternating ring which encloses part of the gamma chain. CF(1) is attached to CF(0) by a central stalk formed by the gamma and epsilon chains, while a peripheral stalk is formed by the delta and b chains.

Its subcellular location is the cell inner membrane. It catalyses the reaction ATP + H2O + 4 H(+)(in) = ADP + phosphate + 5 H(+)(out). Its function is as follows. Produces ATP from ADP in the presence of a proton gradient across the membrane. The alpha chain is a regulatory subunit. The sequence is that of ATP synthase subunit alpha from Klebsiella pneumoniae subsp. pneumoniae (strain ATCC 700721 / MGH 78578).